The chain runs to 380 residues: Cytochrome b (380 aa).

The next 4 membrane-spanning stretches (helical) occupy residues 34-54, 78-99, 114-134, and 179-199; these read SGSL…FLAM, WFLR…YCHI, WNVG…GYVL, and FFPF…IHLV. Residues His84 and His98 each contribute to the heme b site. Residues His183 and His197 each coordinate heme b. His202 contacts a ubiquinone. Transmembrane regions (helical) follow at residues 227–247, 289–309, 321–341, and 348–369; these read TKDT…ALLF, LGGV…PLLN, LSQA…WIGS, and YVLL…GFPI.

This sequence belongs to the cytochrome b family. As to quaternary structure, the main subunits of complex b-c1 are: cytochrome b, cytochrome c1 and the Rieske protein. The cofactor is heme b.

The protein resides in the mitochondrion inner membrane. In terms of biological role, component of the ubiquinol-cytochrome c reductase complex (complex III or cytochrome b-c1 complex) that is part of the mitochondrial respiratory chain. The b-c1 complex mediates electron transfer from ubiquinol to cytochrome c. Contributes to the generation of a proton gradient across the mitochondrial membrane that is then used for ATP synthesis. This is Cytochrome b (MT-CYB) from Strongylocentrotus purpuratus (Purple sea urchin).